A 364-amino-acid chain; its full sequence is Valine dehydrogenase (364 aa).

Lys-91 is a catalytic residue. Residue 191-197 (GVGKVGH) coordinates NAD(+).

It belongs to the Glu/Leu/Phe/Val dehydrogenases family. In terms of assembly, homodimer.

Its subcellular location is the cytoplasm. The catalysed reaction is L-valine + NAD(+) + H2O = 3-methyl-2-oxobutanoate + NH4(+) + NADH + H(+). It functions in the pathway amino-acid degradation; L-valine degradation. Its activity is regulated as follows. Repressed in minimal medium by the presence of glucose and NH4(+), glycerol and NH4(+), or glycerol and asparagine. Oxidative deamination of branched-chain amino acids. Oxidizes L-valine and L-alpha-aminobutyric acid efficiently, and L-isoleucine and L-leucine less efficiently. Does not act on D-valine. The catabolism of L-valine is the major source of fatty acid precursors for macrolide biosynthesis and a vital source of antibiotic precursors. Uses NAD; no activity was found with NADP. This chain is Valine dehydrogenase (vdh), found in Streptomyces coelicolor (strain ATCC BAA-471 / A3(2) / M145).